Here is a 221-residue protein sequence, read N- to C-terminus: Sugar transporter SWEET1 (221 aa).

7 consecutive transmembrane segments (helical) span residues 3–23 (AGGF…LGMF), 42–62 (VQFL…SYGA), 68–88 (ILIV…LAYL), 96–116 (VVLL…GYFW), 129–149 (LGLF…ADLA), 160–180 (LSYP…LYGF), and 186–206 (YIMV…WLFW). The 85-residue stretch at 10–94 (LIYGACVVFT…LAYLHYCPRK (85 aa)) folds into the MtN3/slv 1 domain. In terms of domain architecture, MtN3/slv 2 spans 127-212 (QQLGLFCSVF…WLFWKYPQEQ (86 aa)). The tract at residues 149 to 221 (AKVIQTKSTQ…QDRNYWLLQT (73 aa)) is mediates interaction with TRPV2.

This sequence belongs to the SWEET sugar transporter family. Interacts with TRPV2; the interaction probably occurs intracellularly and depends on TRPV2 N-glycosylation. In terms of tissue distribution, ubiquitously expressed with highest expression in oviduct, epididymis and intestine.

The protein localises to the golgi apparatus membrane. It is found in the cell membrane. In terms of biological role, mediates sugar transport across membranes. May stimulate V(D)J recombination by the activation of RAG1. This chain is Sugar transporter SWEET1 (SLC50A1), found in Homo sapiens (Human).